The chain runs to 749 residues: 1,4-alpha-glucan branching enzyme GlgB (749 aa).

Residue Asp-415 is the Nucleophile of the active site. Glu-468 functions as the Proton donor in the catalytic mechanism.

Belongs to the glycosyl hydrolase 13 family. GlgB subfamily. As to quaternary structure, monomer.

It carries out the reaction Transfers a segment of a (1-&gt;4)-alpha-D-glucan chain to a primary hydroxy group in a similar glucan chain.. It participates in glycan biosynthesis; glycogen biosynthesis. Functionally, catalyzes the formation of the alpha-1,6-glucosidic linkages in glycogen by scission of a 1,4-alpha-linked oligosaccharide from growing alpha-1,4-glucan chains and the subsequent attachment of the oligosaccharide to the alpha-1,6 position. The chain is 1,4-alpha-glucan branching enzyme GlgB from Nitrosococcus oceani (strain ATCC 19707 / BCRC 17464 / JCM 30415 / NCIMB 11848 / C-107).